The sequence spans 547 residues: MAIKDVKFGNDARVKMLKGVNILADAVKVTLGPKGRNVVLDKAYGAPTITKDGVSVAREIELEDKFENMGAQMVKEVASKANDVAGDGTTTATVLAQSIVSEGLRAVAAGMNPMDLKRGIDKAVAAVVEELKAISKPCETSKEIEQVGTISANSDETVGKLIAQAMEKVGKEGVITVEDGTGLDDALDVVEGMQFDRGYLSPYFINKPEAGTVELDNPYIILVDKKISNIREILPVLEAVAKAGKPLLIIAEDVEGEALATLVVNTMRGIVKVAAVKAPGFGDRRKAMLQDIAILTAGTVISEEIGMELEKATLEELGQAKRVVITKDNTTIIDGIGDEAQIKARVVQIRQQIEDSTSDYDKEKLQERVAKLAGGVAVIKVGAATEVAMKEKKDRVDDALHATRAAVEEGIVPGGGVALVRAANKVSATLTGDNEEQNVGIKLALRAMEAPLRQIVENSGEDASVVARDVKDGSGNFGYNATTEEYGDMLEMGILDPTKVTRSALQFAASIAGLMITTECMITDLPKEDKLDAQAAMGGMGGMGGMM.

ATP-binding positions include threonine 30 to proline 33, lysine 51, aspartate 87 to threonine 91, glycine 415, and aspartate 496.

It belongs to the chaperonin (HSP60) family. As to quaternary structure, forms a cylinder of 14 subunits composed of two heptameric rings stacked back-to-back. Interacts with the co-chaperonin GroES.

Its subcellular location is the cytoplasm. The catalysed reaction is ATP + H2O + a folded polypeptide = ADP + phosphate + an unfolded polypeptide.. Its function is as follows. Together with its co-chaperonin GroES, plays an essential role in assisting protein folding. The GroEL-GroES system forms a nano-cage that allows encapsulation of the non-native substrate proteins and provides a physical environment optimized to promote and accelerate protein folding. This Haemophilus ducreyi (strain 35000HP / ATCC 700724) protein is Chaperonin GroEL.